Here is a 57-residue protein sequence, read N- to C-terminus: Large ribosomal subunit protein uL30 (57 aa).

Belongs to the universal ribosomal protein uL30 family. As to quaternary structure, part of the 50S ribosomal subunit.

The protein is Large ribosomal subunit protein uL30 of Buchnera aphidicola subsp. Cinara cedri (strain Cc).